Here is a 287-residue protein sequence, read N- to C-terminus: Phosphatidylserine decarboxylase proenzyme (287 aa).

Active-site charge relay system; for autoendoproteolytic cleavage activity residues include Asp90, His147, and Ser252. Ser252 acts as the Schiff-base intermediate with substrate; via pyruvic acid; for decarboxylase activity in catalysis. At Ser252 the chain carries Pyruvic acid (Ser); by autocatalysis.

This sequence belongs to the phosphatidylserine decarboxylase family. PSD-B subfamily. Prokaryotic type I sub-subfamily. Heterodimer of a large membrane-associated beta subunit and a small pyruvoyl-containing alpha subunit. Requires pyruvate as cofactor. In terms of processing, is synthesized initially as an inactive proenzyme. Formation of the active enzyme involves a self-maturation process in which the active site pyruvoyl group is generated from an internal serine residue via an autocatalytic post-translational modification. Two non-identical subunits are generated from the proenzyme in this reaction, and the pyruvate is formed at the N-terminus of the alpha chain, which is derived from the carboxyl end of the proenzyme. The autoendoproteolytic cleavage occurs by a canonical serine protease mechanism, in which the side chain hydroxyl group of the serine supplies its oxygen atom to form the C-terminus of the beta chain, while the remainder of the serine residue undergoes an oxidative deamination to produce ammonia and the pyruvoyl prosthetic group on the alpha chain. During this reaction, the Ser that is part of the protease active site of the proenzyme becomes the pyruvoyl prosthetic group, which constitutes an essential element of the active site of the mature decarboxylase.

The protein localises to the cell membrane. The enzyme catalyses a 1,2-diacyl-sn-glycero-3-phospho-L-serine + H(+) = a 1,2-diacyl-sn-glycero-3-phosphoethanolamine + CO2. It participates in phospholipid metabolism; phosphatidylethanolamine biosynthesis; phosphatidylethanolamine from CDP-diacylglycerol: step 2/2. Catalyzes the formation of phosphatidylethanolamine (PtdEtn) from phosphatidylserine (PtdSer). The polypeptide is Phosphatidylserine decarboxylase proenzyme (Pseudomonas entomophila (strain L48)).